The sequence spans 270 residues: Thiazole synthase (270 aa).

Lys112 acts as the Schiff-base intermediate with DXP in catalysis. 1-deoxy-D-xylulose 5-phosphate contacts are provided by residues Gly173, 199-200 (AG), and 221-222 (NS).

The protein belongs to the ThiG family. In terms of assembly, homotetramer. Forms heterodimers with either ThiH or ThiS.

The protein localises to the cytoplasm. The catalysed reaction is [ThiS sulfur-carrier protein]-C-terminal-Gly-aminoethanethioate + 2-iminoacetate + 1-deoxy-D-xylulose 5-phosphate = [ThiS sulfur-carrier protein]-C-terminal Gly-Gly + 2-[(2R,5Z)-2-carboxy-4-methylthiazol-5(2H)-ylidene]ethyl phosphate + 2 H2O + H(+). Its pathway is cofactor biosynthesis; thiamine diphosphate biosynthesis. Its function is as follows. Catalyzes the rearrangement of 1-deoxy-D-xylulose 5-phosphate (DXP) to produce the thiazole phosphate moiety of thiamine. Sulfur is provided by the thiocarboxylate moiety of the carrier protein ThiS. In vitro, sulfur can be provided by H(2)S. This Pseudomonas putida (strain ATCC 700007 / DSM 6899 / JCM 31910 / BCRC 17059 / LMG 24140 / F1) protein is Thiazole synthase.